The following is a 295-amino-acid chain: Pyridoxal 5'-phosphate synthase subunit PdxS (295 aa).

Asp-23 is a binding site for D-ribose 5-phosphate. Lys-80 serves as the catalytic Schiff-base intermediate with D-ribose 5-phosphate. Gly-152 is a D-ribose 5-phosphate binding site. Arg-164 provides a ligand contact to D-glyceraldehyde 3-phosphate. D-ribose 5-phosphate contacts are provided by residues Gly-213 and 234 to 235 (GS).

Belongs to the PdxS/SNZ family. In the presence of PdxT, forms a dodecamer of heterodimers.

It carries out the reaction aldehydo-D-ribose 5-phosphate + D-glyceraldehyde 3-phosphate + L-glutamine = pyridoxal 5'-phosphate + L-glutamate + phosphate + 3 H2O + H(+). It participates in cofactor biosynthesis; pyridoxal 5'-phosphate biosynthesis. Functionally, catalyzes the formation of pyridoxal 5'-phosphate from ribose 5-phosphate (RBP), glyceraldehyde 3-phosphate (G3P) and ammonia. The ammonia is provided by the PdxT subunit. Can also use ribulose 5-phosphate and dihydroxyacetone phosphate as substrates, resulting from enzyme-catalyzed isomerization of RBP and G3P, respectively. The sequence is that of Pyridoxal 5'-phosphate synthase subunit PdxS from Methanopyrus kandleri (strain AV19 / DSM 6324 / JCM 9639 / NBRC 100938).